A 273-amino-acid polypeptide reads, in one-letter code: Outer surface protein A (273 aa).

The first 16 residues, 1–16 (MKKYLLGIGLILALIA), serve as a signal peptide directing secretion. Cysteine 17 is lipidated: N-palmitoyl cysteine. Cysteine 17 carries S-diacylglycerol cysteine lipidation.

Belongs to the OspA lipoprotein family.

It is found in the cell outer membrane. It localises to the cell surface. In terms of biological role, induces host (human and mouse) cytokine release by monocyte cell lines via TLR2 and CD14; nonlipidated protein does not stimulate host cells. This is Outer surface protein A from Borreliella burgdorferi (strain ATCC 35210 / DSM 4680 / CIP 102532 / B31) (Borrelia burgdorferi).